A 476-amino-acid polypeptide reads, in one-letter code: Glycogen synthase (476 aa).

Residue K15 participates in ADP-alpha-D-glucose binding.

It belongs to the glycosyltransferase 1 family. Bacterial/plant glycogen synthase subfamily.

The catalysed reaction is [(1-&gt;4)-alpha-D-glucosyl](n) + ADP-alpha-D-glucose = [(1-&gt;4)-alpha-D-glucosyl](n+1) + ADP + H(+). It participates in glycan biosynthesis; glycogen biosynthesis. Its function is as follows. Synthesizes alpha-1,4-glucan chains using ADP-glucose. The protein is Glycogen synthase of Streptococcus mutans serotype c (strain ATCC 700610 / UA159).